A 191-amino-acid chain; its full sequence is Large ribosomal subunit protein uL5 (191 aa).

It belongs to the universal ribosomal protein uL5 family. Part of the 50S ribosomal subunit; part of the 5S rRNA/L5/L18/L25 subcomplex. Contacts the 5S rRNA and the P site tRNA. Forms a bridge to the 30S subunit in the 70S ribosome.

Functionally, this is one of the proteins that bind and probably mediate the attachment of the 5S RNA into the large ribosomal subunit, where it forms part of the central protuberance. In the 70S ribosome it contacts protein S13 of the 30S subunit (bridge B1b), connecting the 2 subunits; this bridge is implicated in subunit movement. Contacts the P site tRNA; the 5S rRNA and some of its associated proteins might help stabilize positioning of ribosome-bound tRNAs. This Thermobifida fusca (strain YX) protein is Large ribosomal subunit protein uL5.